The primary structure comprises 207 residues: Holliday junction branch migration complex subunit RuvA (207 aa).

The interval 1–63 (MIDSLHGEVL…DDGIDLYAFE (63 aa)) is domain I. Residues 64–142 (SDEARQMFAM…VFDSGDSASE (79 aa)) form a domain II region. Residues 143-154 (PQSGVGGNSEAE) are flexible linker. The interval 155 to 207 (VDSGVVGTVTQALVELGFPEKQAEKTATSAAAEGGSVSEILKRALRSMSSERN) is domain III.

It belongs to the RuvA family. As to quaternary structure, homotetramer. Forms an RuvA(8)-RuvB(12)-Holliday junction (HJ) complex. HJ DNA is sandwiched between 2 RuvA tetramers; dsDNA enters through RuvA and exits via RuvB. An RuvB hexamer assembles on each DNA strand where it exits the tetramer. Each RuvB hexamer is contacted by two RuvA subunits (via domain III) on 2 adjacent RuvB subunits; this complex drives branch migration. In the full resolvosome a probable DNA-RuvA(4)-RuvB(12)-RuvC(2) complex forms which resolves the HJ.

The protein localises to the cytoplasm. Its function is as follows. The RuvA-RuvB-RuvC complex processes Holliday junction (HJ) DNA during genetic recombination and DNA repair, while the RuvA-RuvB complex plays an important role in the rescue of blocked DNA replication forks via replication fork reversal (RFR). RuvA specifically binds to HJ cruciform DNA, conferring on it an open structure. The RuvB hexamer acts as an ATP-dependent pump, pulling dsDNA into and through the RuvAB complex. HJ branch migration allows RuvC to scan DNA until it finds its consensus sequence, where it cleaves and resolves the cruciform DNA. The sequence is that of Holliday junction branch migration complex subunit RuvA from Corynebacterium kroppenstedtii (strain DSM 44385 / JCM 11950 / CIP 105744 / CCUG 35717).